Here is a 1299-residue protein sequence, read N- to C-terminus: DNA-directed RNA polymerase subunit beta' (1299 aa).

Positions 60, 62, 75, and 78 each coordinate Zn(2+). The segment at 188-209 (GAKSDQKRRAKDGAEKEMGQTR) is disordered. Positions 535, 537, and 539 each coordinate Mg(2+). Positions 882, 959, 966, and 969 each coordinate Zn(2+).

The protein belongs to the RNA polymerase beta' chain family. As to quaternary structure, the RNAP catalytic core consists of 2 alpha, 1 beta, 1 beta' and 1 omega subunit. When a sigma factor is associated with the core the holoenzyme is formed, which can initiate transcription. Mg(2+) serves as cofactor. The cofactor is Zn(2+).

The catalysed reaction is RNA(n) + a ribonucleoside 5'-triphosphate = RNA(n+1) + diphosphate. DNA-dependent RNA polymerase catalyzes the transcription of DNA into RNA using the four ribonucleoside triphosphates as substrates. This Clavibacter michiganensis subsp. michiganensis (strain NCPPB 382) protein is DNA-directed RNA polymerase subunit beta'.